A 409-amino-acid chain; its full sequence is Tyrosine--tRNA ligase (409 aa).

Residue Y35 participates in L-tyrosine binding. The 'HIGH' region signature appears at 40-49 (PTGSSLHVGH). Residues Y168 and Q172 each coordinate L-tyrosine. Residues 228–232 (KMGKT) carry the 'KMSKS' region motif. Residue K231 coordinates ATP. An S4 RNA-binding domain is found at 339–404 (IKVTDLFVQV…AGKKRVVRIV (66 aa)).

Belongs to the class-I aminoacyl-tRNA synthetase family. TyrS type 1 subfamily. In terms of assembly, homodimer.

It is found in the cytoplasm. The enzyme catalyses tRNA(Tyr) + L-tyrosine + ATP = L-tyrosyl-tRNA(Tyr) + AMP + diphosphate + H(+). Its function is as follows. Catalyzes the attachment of tyrosine to tRNA(Tyr) in a two-step reaction: tyrosine is first activated by ATP to form Tyr-AMP and then transferred to the acceptor end of tRNA(Tyr). This Treponema pallidum (strain Nichols) protein is Tyrosine--tRNA ligase.